The following is a 123-amino-acid chain: Small ribosomal subunit protein uS12 (123 aa).

Aspartate 89 is modified (3-methylthioaspartic acid).

This sequence belongs to the universal ribosomal protein uS12 family. In terms of assembly, part of the 30S ribosomal subunit. Contacts proteins S8 and S17. May interact with IF1 in the 30S initiation complex.

With S4 and S5 plays an important role in translational accuracy. In terms of biological role, interacts with and stabilizes bases of the 16S rRNA that are involved in tRNA selection in the A site and with the mRNA backbone. Located at the interface of the 30S and 50S subunits, it traverses the body of the 30S subunit contacting proteins on the other side and probably holding the rRNA structure together. The combined cluster of proteins S8, S12 and S17 appears to hold together the shoulder and platform of the 30S subunit. This chain is Small ribosomal subunit protein uS12, found in Bifidobacterium animalis subsp. lactis (strain AD011).